A 337-amino-acid chain; its full sequence is UPF0284 protein AF_0276 (337 aa).

The protein belongs to the UPF0284 family.

This chain is UPF0284 protein AF_0276, found in Archaeoglobus fulgidus (strain ATCC 49558 / DSM 4304 / JCM 9628 / NBRC 100126 / VC-16).